The following is a 626-amino-acid chain: MEFVAGEYDIVVVGAGHAGCEAALACARLGLKTIVFAINLDSIGNMPCNPSIGGTGKGHLVREIDALGGEMGKAADATAIQVRILNRAKGPAVYSLRAQCDRARYKLYMKRVLESQPNLDIRQGEVCDILVEDGKVTGVKLTTGAIFRAKAVVLATGTFLGGRIIIGETVYDGGPDGMHPAKYLTESLKKLGIEMMRFKTGTPARVHRRSLDFSKMQIQLGDEVITPFSFEHETLEIEQVPCYLTYTTEETHRIIRENLHRAPLFTGLIQGVGPRYCPSIEDKVVRFADKPRHQVFIEPMGRDTEEMYVQGMSSSLPEDVQIKMYRSVIGLENVQIMRPAYAIEYDCINPLQLEATLQFKKIKGLFSAGQINGTSGYEEAAAQGIIAGINAAMYVKGKEMLVLDRSQAYIGVLIDDLVTKGTNEPYRIMTSRAEYRLILRQDNADLRLTEIGYRIGLISQERYEKFLKKKKMIEDEIERLKKTVIAPSDKVNKFLIEHGSSPISTGVKLSELLKRPELSYEALREIDPQRPDLPRSVKEEVEIEIKYEGYIKKQLQQIEQFKKLENKKIPEWVDYNQISGLSTEAKQKLSQIRPASIGQASRISGVSPADISVLLIWLEQAKKGSK.

14 to 19 (GAGHAG) lines the FAD pocket. 273–287 (GPRYCPSIEDKVVRF) lines the NAD(+) pocket.

This sequence belongs to the MnmG family. Homodimer. Heterotetramer of two MnmE and two MnmG subunits. FAD serves as cofactor.

It localises to the cytoplasm. Its function is as follows. NAD-binding protein involved in the addition of a carboxymethylaminomethyl (cmnm) group at the wobble position (U34) of certain tRNAs, forming tRNA-cmnm(5)s(2)U34. The protein is tRNA uridine 5-carboxymethylaminomethyl modification enzyme MnmG of Caldicellulosiruptor saccharolyticus (strain ATCC 43494 / DSM 8903 / Tp8T 6331).